The sequence spans 499 residues: 3-beta-hydroxylase (499 aa).

A helical; Signal-anchor for type II membrane protein membrane pass occupies residues 2-22 (FSSFETLILSFVSLFFMMIFI). Cysteine 441 provides a ligand contact to heme.

The protein belongs to the cytochrome P450 family. Requires heme as cofactor.

The protein localises to the membrane. The enzyme catalyses (+)-costunolide + reduced [NADPH--hemoprotein reductase] + O2 = 3beta-hydroxycostunolide + oxidized [NADPH--hemoprotein reductase] + H2O + H(+). The catalysed reaction is parthenolide + reduced [NADPH--hemoprotein reductase] + O2 = 3beta-hydroxyparthenolide + oxidized [NADPH--hemoprotein reductase] + H2O + H(+). The protein operates within secondary metabolite biosynthesis; terpenoid biosynthesis. In terms of biological role, involved in the biosynthesis of germacrene-derived sesquiterpene lactones. Component of the parthenolide biosynthetic pathway; parthenolide and conjugates are promising anti-cancer drugs highly active against colon cancer cells. Catalyzes the conversion of costunolide and parthenolide to 3-beta-hydroxycostunolide and 3-beta-hydroxyparthenolide, respectively. The protein is 3-beta-hydroxylase of Tanacetum parthenium (Feverfew).